A 1181-amino-acid polypeptide reads, in one-letter code: Cellulose synthase-like protein D5 (1181 aa).

Polar residues predominate over residues 1–17 (MVKSAASQSPSPVTITV). Disordered regions lie at residues 1–70 (MVKS…DEGR) and 202–229 (KEPY…LPQM). Positions 48-59 (SSRATRRTSISS) are enriched in low complexity. Positions 210–222 (DDPETEEEDEEDE) are enriched in acidic residues. The next 2 membrane-spanning stretches (helical) occupy residues 312–332 (AIIS…GLFL) and 343–363 (AMWL…SWLL). D443 is an active-site residue. The stretch at 497-542 (VRERRRVKREYDEFKVRINSLPEAIRRRSDAYNVHEELRAKKKQME) forms a coiled coil. D884 is an active-site residue. Helical transmembrane passes span 966-986 (LFLI…QFIV), 991-1011 (ITFL…SLLE), 1038-1058 (PAAV…SFTL), 1082-1102 (FLMV…AVGL), 1116-1136 (LVGG…FAKG), and 1146-1166 (TIVF…WVYI).

It belongs to the glycosyltransferase 2 family. Plant cellulose synthase-like D subfamily. Expressed in vascular tissues.

It localises to the golgi apparatus membrane. Involved in stem and root growth. Possesses xylan and homogalacturonan synthase activity. The sequence is that of Cellulose synthase-like protein D5 (CSLD5) from Arabidopsis thaliana (Mouse-ear cress).